Consider the following 1323-residue polypeptide: Inositol hexakisphosphate and diphosphoinositol-pentakisphosphate kinase (1323 aa).

Arg-26–Lys-27 provides a ligand contact to substrate. ATP is bound by residues Arg-109, Lys-162, His-169, Arg-188, Glu-212–Ile-215, and Asp-221–Lys-223. A substrate-binding site is contributed by Arg-188–Lys-189. Lys-223 and Arg-237 together coordinate substrate. ATP-binding positions include Asp-284 and Asp-296–Asn-298. Residue Ser-301–Lys-304 participates in substrate binding. The polyphosphoinositide-binding domain stretch occupies residues Thr-355–Ile-426. Polar residues-rich tracts occupy residues Phe-933 to Ser-947 and Val-977 to Leu-992. 3 disordered regions span residues Phe-933 to Asp-1022, Ala-1043 to Lys-1107, and Ile-1134 to Arg-1155. The span at Ser-993 to Thr-1006 shows a compositional bias: low complexity. Positions Lys-1062 to Trp-1074 are enriched in basic and acidic residues. The span at Ser-1090–Glu-1101 shows a compositional bias: low complexity.

Belongs to the histidine acid phosphatase family. VIP1 subfamily.

Its subcellular location is the cytoplasm. It is found in the cytosol. It catalyses the reaction 1D-myo-inositol hexakisphosphate + ATP = 1-diphospho-1D-myo-inositol 2,3,4,5,6-pentakisphosphate + ADP. The catalysed reaction is 5-diphospho-1D-myo-inositol 1,2,3,4,6-pentakisphosphate + ATP + H(+) = 1,5-bis(diphospho)-1D-myo-inositol 2,3,4,6-tetrakisphosphate + ADP. Its function is as follows. Bifunctional inositol kinase that acts in concert with the IP6K kinases to synthesize the diphosphate group-containing inositol pyrophosphates diphosphoinositol pentakisphosphate, PP-InsP5, and bis-diphosphoinositol tetrakisphosphate, (PP)2-InsP4. PP-InsP5 and (PP)2-InsP4, also respectively called InsP7 and InsP8, may regulate a variety of cellular processes, including apoptosis, vesicle trafficking, cytoskeletal dynamics, and exocytosis. Phosphorylates inositol hexakisphosphate (InsP6) at position 1 to produce PP-InsP5 which is in turn phosphorylated by IP6Ks to produce (PP)2-InsP4. Alternatively, phosphorylates PP-InsP5 at position 1, produced by IP6Ks from InsP6, to produce (PP)2-InsP4. The sequence is that of Inositol hexakisphosphate and diphosphoinositol-pentakisphosphate kinase from Caenorhabditis elegans.